Reading from the N-terminus, the 457-residue chain is Bifunctional protein GlmU (457 aa).

The pyrophosphorylase stretch occupies residues 1 to 236; the sequence is MDQDACTHSA…DWHFLGVNTP (236 aa). Residues 14–17, Lys-28, Gln-79, and 84–85 each bind UDP-N-acetyl-alpha-D-glucosamine; these read LAAG and GT. Mg(2+) is bound at residue Asp-110. Residues Gly-145, Glu-159, Asn-176, and Asn-234 each contribute to the UDP-N-acetyl-alpha-D-glucosamine site. Asn-234 lines the Mg(2+) pocket. Residues 237 to 257 form a linker region; sequence KDLSYVESIQQAFIIEKLLQS. The tract at residues 258-457 is N-acetyltransferase; that stretch reads GVIIHSPESV…GKQKNFSKRK (200 aa). Arg-340 and Lys-358 together coordinate UDP-N-acetyl-alpha-D-glucosamine. The active-site Proton acceptor is the His-370. The UDP-N-acetyl-alpha-D-glucosamine site is built by Tyr-373 and Asn-384. Acetyl-CoA contacts are provided by residues Ala-387, 393-394, Ser-412, Ala-430, and Arg-447; that span reads NY.

This sequence in the N-terminal section; belongs to the N-acetylglucosamine-1-phosphate uridyltransferase family. The protein in the C-terminal section; belongs to the transferase hexapeptide repeat family. Homotrimer. It depends on Mg(2+) as a cofactor.

It localises to the cytoplasm. It catalyses the reaction alpha-D-glucosamine 1-phosphate + acetyl-CoA = N-acetyl-alpha-D-glucosamine 1-phosphate + CoA + H(+). It carries out the reaction N-acetyl-alpha-D-glucosamine 1-phosphate + UTP + H(+) = UDP-N-acetyl-alpha-D-glucosamine + diphosphate. It participates in nucleotide-sugar biosynthesis; UDP-N-acetyl-alpha-D-glucosamine biosynthesis; N-acetyl-alpha-D-glucosamine 1-phosphate from alpha-D-glucosamine 6-phosphate (route II): step 2/2. The protein operates within nucleotide-sugar biosynthesis; UDP-N-acetyl-alpha-D-glucosamine biosynthesis; UDP-N-acetyl-alpha-D-glucosamine from N-acetyl-alpha-D-glucosamine 1-phosphate: step 1/1. Its pathway is bacterial outer membrane biogenesis; LPS lipid A biosynthesis. Functionally, catalyzes the last two sequential reactions in the de novo biosynthetic pathway for UDP-N-acetylglucosamine (UDP-GlcNAc). The C-terminal domain catalyzes the transfer of acetyl group from acetyl coenzyme A to glucosamine-1-phosphate (GlcN-1-P) to produce N-acetylglucosamine-1-phosphate (GlcNAc-1-P), which is converted into UDP-GlcNAc by the transfer of uridine 5-monophosphate (from uridine 5-triphosphate), a reaction catalyzed by the N-terminal domain. This is Bifunctional protein GlmU from Lawsonia intracellularis (strain PHE/MN1-00).